Reading from the N-terminus, the 117-residue chain is Basic phospholipase A2 pseudexin A chain (117 aa).

Intrachain disulfides connect Cys11-Cys71, Cys27-Cys117, Cys29-Cys45, Cys44-Cys98, Cys51-Cys91, Cys60-Cys84, and Cys78-Cys89. 3 residues coordinate Ca(2+): Tyr28, Gly30, and Gly32. His48 is an active-site residue. Position 49 (Asp49) interacts with Ca(2+). Asp92 is an active-site residue.

Belongs to the phospholipase A2 family. Group I subfamily. D49 sub-subfamily. Ca(2+) serves as cofactor. Expressed by the venom gland.

Its subcellular location is the secreted. It catalyses the reaction a 1,2-diacyl-sn-glycero-3-phosphocholine + H2O = a 1-acyl-sn-glycero-3-phosphocholine + a fatty acid + H(+). Its function is as follows. PLA2 catalyzes the calcium-dependent hydrolysis of the 2-acyl groups in 3-sn-phosphoglycerides. The polypeptide is Basic phospholipase A2 pseudexin A chain (Pseudechis porphyriacus (Red-bellied black snake)).